Here is a 70-residue protein sequence, read N- to C-terminus: MSQVCDICGKGPQTGNNVSHAHNKTKRRFMPNLQKVRTQLPSGEVKSIKACTRCIRSGAVVKPVAKKAVS.

It belongs to the bacterial ribosomal protein bL28 family.

In Maridesulfovibrio salexigens (strain ATCC 14822 / DSM 2638 / NCIMB 8403 / VKM B-1763) (Desulfovibrio salexigens), this protein is Large ribosomal subunit protein bL28.